Reading from the N-terminus, the 78-residue chain is Large ribosomal subunit protein eL20 (78 aa).

This sequence belongs to the eukaryotic ribosomal protein eL20 family. In terms of assembly, part of the 50S ribosomal subunit. Binds 23S rRNA.

This Methanothermobacter thermautotrophicus (strain ATCC 29096 / DSM 1053 / JCM 10044 / NBRC 100330 / Delta H) (Methanobacterium thermoautotrophicum) protein is Large ribosomal subunit protein eL20.